The following is a 356-amino-acid chain: Staphylococcal superantigen-like 3 (356 aa).

Positions Met-1 to Ala-30 are cleaved as a signal peptide. The interval Ala-61 to Thr-165 is disordered. Residues Arg-69–Lys-104 are compositionally biased toward basic and acidic residues. Residues Pro-114–Pro-141 show a composition bias toward low complexity. The span at Gln-142–Met-164 shows a compositional bias: polar residues. Residues Ile-228–Tyr-326 are sialyl Lewis X-binding.

This sequence belongs to the staphylococcal/streptococcal toxin family. In terms of assembly, interacts with host TLR2 (via its extracellular domain).

The protein localises to the secreted. Its function is as follows. Secreted protein that plays an essential role in immune innate response inhibition by interacting with and inhibiting host TLR2. In turn, bacteria recognition by immune cells is impaired and cytokine production is inhibited. Mechanistically, by interacting with TLR2, blocks ligand binding and thus inhibits activation. Second, by interacting with an already formed TLR2-lipopeptide complex, prevents TLR heterodimerization and downstream signaling. The interaction with host TLR2 does not involve sialyl Lewis X interactions. This is Staphylococcal superantigen-like 3 from Staphylococcus aureus (strain NCTC 8325 / PS 47).